The chain runs to 582 residues: MGNSSSTPPPSALKNSDLFKTMLRTQYSGSVKTRRINQDIKKQYPLWPDQGTCATKHWEQAVLIPLDSVSEETAKVLNFLRVKIQARKGETARQMTAHTIKKLIVGTIDKNKQQTEILQKTDESDEEMDTTNTMLFIARNKRERIAQQQQADLAAQQQVLLLQREQQREQREKDIKKRDEKKKKLLPDTTQKVEQTDIGEASSSDASAQKPISTDNNPDLKVDGVLTRSQHTTVPSNITIKKDGTSVQYQHPIRNYPTGEGNLTAQVRNPFRPLELQQLRKDCPALPEGIPQLAEWLTQTMAIYNCDEADVEQLARVIFPTPVRQIAGVINGHAAANTAAKIQNYVTACRQHYPAVCDWGTIQAFTYKPPQTAHEYVKHAEIIFKNNSGLEWQHATVPFINMVVQGLPPKVTRSLMSGNPDWSTKTIPQIIPLMQHYLNLQSRQDAKIKQTPLVLQLAMPAQTMNGNKGYVGSYPTNEPYYSFQQQQRPAPRAPPGNVPSNTCFFCKQPGHWKADCPNKTRNLRNMGNMGRGGRMGGPPYRSQPYPAFIQPPQNHQNQYNGRMDRSQLQASAQEWLPGTYPA.

Gly-2 carries N-myristoyl glycine; by host lipidation. A coiled-coil region spans residues 154–185 (AAQQQVLLLQREQQREQREKDIKKRDEKKKKL). A compositionally biased stretch (basic and acidic residues) spans 168 to 178 (REQREKDIKKR). A disordered region spans residues 168-222 (REQREKDIKKRDEKKKKLLPDTTQKVEQTDIGEASSSDASAQKPISTDNNPDLKV). The span at 201–217 (ASSSDASAQKPISTDNN) shows a compositional bias: polar residues. A CCHC-type zinc finger spans residues 501–518 (NTCFFCKQPGHWKADCPN).

In terms of processing, specific enzymatic cleavages by the viral protease yield mature proteins. The protease is released by autocatalytic cleavage. The polyprotein is cleaved during and after budding, this process is termed maturation.

Its subcellular location is the virion. It is found in the host cell membrane. Its function is as follows. Targets Gag and gag-pol polyproteins to the plasma membrane via a multipartite membrane binding signal, that includes its myristoylated N-terminus. Also mediates nuclear localization of the preintegration complex. In terms of biological role, capsid protein p25 forms the spherical core of the virion that encapsulates the genomic RNA-nucleocapsid complex. Involved in the packaging and encapsidation of two copies of the genome. Binds with high affinity to conserved UCUG elements within the packaging signal, located near the 5'-end of the genome. This binding is dependent on genome dimerization. Functionally, plays a role in budding and is processed by the viral protease during virion maturation outside the cell. This chain is Gag polyprotein (gag), found in Sander vitreus (Walleye).